A 294-amino-acid chain; its full sequence is ATP synthase gamma chain (294 aa).

Belongs to the ATPase gamma chain family. As to quaternary structure, F-type ATPases have 2 components, CF(1) - the catalytic core - and CF(0) - the membrane proton channel. CF(1) has five subunits: alpha(3), beta(3), gamma(1), delta(1), epsilon(1). CF(0) has three main subunits: a, b and c.

Its subcellular location is the cell inner membrane. Produces ATP from ADP in the presence of a proton gradient across the membrane. The gamma chain is believed to be important in regulating ATPase activity and the flow of protons through the CF(0) complex. The polypeptide is ATP synthase gamma chain (Rhizobium leguminosarum bv. trifolii (strain WSM2304)).